We begin with the raw amino-acid sequence, 276 residues long: Undecaprenyl-diphosphatase 2 (276 aa).

The next 8 membrane-spanning stretches (helical) occupy residues 1-21 (MSLW…LFPV), 44-64 (QLLP…LWYF), 87-107 (GHLM…GLLL), 114-134 (VFHD…LLWL), 150-170 (LTFK…IPGF), 190-210 (AAEF…LLEL), 222-242 (DALL…RFLM), and 251-271 (LASF…WFMF).

It belongs to the UppP family.

The protein resides in the cell inner membrane. It catalyses the reaction di-trans,octa-cis-undecaprenyl diphosphate + H2O = di-trans,octa-cis-undecaprenyl phosphate + phosphate + H(+). In terms of biological role, catalyzes the dephosphorylation of undecaprenyl diphosphate (UPP). Confers resistance to bacitracin. This chain is Undecaprenyl-diphosphatase 2, found in Burkholderia thailandensis (strain ATCC 700388 / DSM 13276 / CCUG 48851 / CIP 106301 / E264).